A 694-amino-acid chain; its full sequence is Elongation factor G (694 aa).

The region spanning 9–288 is the tr-type G domain; that stretch reads SKIRNIGIMA…VIVKWLPSPK (280 aa). Residues 18–25, 82–86, and 136–139 each bind GTP; these read AHIDAGKT, DTPGH, and NKMD.

This sequence belongs to the TRAFAC class translation factor GTPase superfamily. Classic translation factor GTPase family. EF-G/EF-2 subfamily.

Its subcellular location is the cytoplasm. In terms of biological role, catalyzes the GTP-dependent ribosomal translocation step during translation elongation. During this step, the ribosome changes from the pre-translocational (PRE) to the post-translocational (POST) state as the newly formed A-site-bound peptidyl-tRNA and P-site-bound deacylated tRNA move to the P and E sites, respectively. Catalyzes the coordinated movement of the two tRNA molecules, the mRNA and conformational changes in the ribosome. The sequence is that of Elongation factor G from Chlamydia caviae (strain ATCC VR-813 / DSM 19441 / 03DC25 / GPIC) (Chlamydophila caviae).